A 74-amino-acid polypeptide reads, in one-letter code: uncharacterized protein (74 aa).

Positions Gln25 to Val62 form a coiled coil.

This is an uncharacterized protein from Bacillus subtilis (strain 168).